The primary structure comprises 385 residues: Carbamoyl phosphate synthase small chain (385 aa).

Residues 1 to 185 (MSEPAILVLA…LGKGFIEQTQ (185 aa)) are CPSase. Residues S47, G237, and G239 each coordinate L-glutamine. Residues 189-376 (NVVAYDFGVK…INEMRKANLS (188 aa)) form the Glutamine amidotransferase type-1 domain. The Nucleophile role is filled by C265. Residues L266, Q269, N307, G309, and F310 each coordinate L-glutamine. Catalysis depends on residues H349 and E351.

The protein belongs to the CarA family. Composed of two chains; the small (or glutamine) chain promotes the hydrolysis of glutamine to ammonia, which is used by the large (or ammonia) chain to synthesize carbamoyl phosphate. Tetramer of heterodimers (alpha,beta)4.

It carries out the reaction hydrogencarbonate + L-glutamine + 2 ATP + H2O = carbamoyl phosphate + L-glutamate + 2 ADP + phosphate + 2 H(+). It catalyses the reaction L-glutamine + H2O = L-glutamate + NH4(+). Its pathway is amino-acid biosynthesis; L-arginine biosynthesis; carbamoyl phosphate from bicarbonate: step 1/1. It functions in the pathway pyrimidine metabolism; UMP biosynthesis via de novo pathway; (S)-dihydroorotate from bicarbonate: step 1/3. Small subunit of the glutamine-dependent carbamoyl phosphate synthetase (CPSase). CPSase catalyzes the formation of carbamoyl phosphate from the ammonia moiety of glutamine, carbonate, and phosphate donated by ATP, constituting the first step of 2 biosynthetic pathways, one leading to arginine and/or urea and the other to pyrimidine nucleotides. The small subunit (glutamine amidotransferase) binds and cleaves glutamine to supply the large subunit with the substrate ammonia. The chain is Carbamoyl phosphate synthase small chain from Pasteurella multocida (strain Pm70).